The following is a 107-amino-acid chain: Ig kappa chain V-VI region SAPC 10 (107 aa).

The tract at residues 1-23 (EIVLTQSPAITAASLGQKVTITC) is framework-1. A disulfide bond links C23 and C87. Residues 24–33 (SASSSVSYMH) form a complementarity-determining-1 region. The framework-2 stretch occupies residues 34–48 (WYQQKSGTSPKPWIY). The complementarity-determining-2 stretch occupies residues 49–55 (EISKLAS). Residues 56 to 87 (GVPARFSGSGSGTSYSLTISSMEAEDAAIYYC) are framework-3. Positions 88–96 (QQWNYPLIT) are complementarity-determining-3. A framework-4 region spans residues 97–106 (FGGGTKLEIK).

The polypeptide is Ig kappa chain V-VI region SAPC 10 (Mus musculus (Mouse)).